The sequence spans 734 residues: Photosystem I P700 chlorophyll a apoprotein A2 (734 aa).

8 helical membrane passes run 46-69 (IFASHFGQLAIIFLWTSGNLFHVA), 135-158 (LYTGALFLLLISAISLIAGWLHLQ), 175-199 (LNHHLSGLFGVSSLAWTGHLVHVAI), 273-291 (MAHHHLAIAFLFLIAGHMY), 330-353 (LHFQLGLALASLGVITSLVAQHMY), 369-395 (AALYTHHQYIAGFIMTGAFAHGAIFFI), 417-439 (AIISHLSWASLFLGFHTLGLYVH), and 517-535 (FLVHHAIALGLHTTTLILV). Residues Cys-559 and Cys-568 each contribute to the [4Fe-4S] cluster site. The next 2 membrane-spanning stretches (helical) occupy residues 575–596 (AFYLAVFWMLNTIGWVTFYWHW) and 643–665 (LSVWAWMFLFGHLVWATGFMFLI). Positions 654, 662, and 670 each coordinate chlorophyll a. Residue Trp-671 participates in phylloquinone binding. A helical transmembrane segment spans residues 707–727 (LVGLAHFSVGYIFTYAAFLIA).

It belongs to the PsaA/PsaB family. In terms of assembly, the PsaA/B heterodimer binds the P700 chlorophyll special pair and subsequent electron acceptors. PSI consists of a core antenna complex that captures photons, and an electron transfer chain that converts photonic excitation into a charge separation. The eukaryotic PSI reaction center is composed of at least 11 subunits. The cofactor is P700 is a chlorophyll a/chlorophyll a' dimer, A0 is one or more chlorophyll a, A1 is one or both phylloquinones and FX is a shared 4Fe-4S iron-sulfur center..

The protein localises to the plastid. It localises to the chloroplast thylakoid membrane. It carries out the reaction reduced [plastocyanin] + hnu + oxidized [2Fe-2S]-[ferredoxin] = oxidized [plastocyanin] + reduced [2Fe-2S]-[ferredoxin]. Its function is as follows. PsaA and PsaB bind P700, the primary electron donor of photosystem I (PSI), as well as the electron acceptors A0, A1 and FX. PSI is a plastocyanin-ferredoxin oxidoreductase, converting photonic excitation into a charge separation, which transfers an electron from the donor P700 chlorophyll pair to the spectroscopically characterized acceptors A0, A1, FX, FA and FB in turn. Oxidized P700 is reduced on the lumenal side of the thylakoid membrane by plastocyanin. This is Photosystem I P700 chlorophyll a apoprotein A2 from Lactuca sativa (Garden lettuce).